The primary structure comprises 118 residues: Large ribosomal subunit protein bL20 (118 aa).

It belongs to the bacterial ribosomal protein bL20 family.

Binds directly to 23S ribosomal RNA and is necessary for the in vitro assembly process of the 50S ribosomal subunit. It is not involved in the protein synthesizing functions of that subunit. The sequence is that of Large ribosomal subunit protein bL20 from Acidiphilium cryptum (strain JF-5).